The following is a 192-amino-acid chain: Protein GrpE (192 aa).

Over residues 1-20 (MEERNEQVVEEVKEEVKEAQ) the composition is skewed to basic and acidic residues. The disordered stretch occupies residues 1–34 (MEERNEQVVEEVKEEVKEAQVEEAVTSEDSEETV). Residues 25-34 (VTSEDSEETV) are compositionally biased toward acidic residues.

The protein belongs to the GrpE family. As to quaternary structure, homodimer.

Its subcellular location is the cytoplasm. Its function is as follows. Participates actively in the response to hyperosmotic and heat shock by preventing the aggregation of stress-denatured proteins, in association with DnaK and GrpE. It is the nucleotide exchange factor for DnaK and may function as a thermosensor. Unfolded proteins bind initially to DnaJ; upon interaction with the DnaJ-bound protein, DnaK hydrolyzes its bound ATP, resulting in the formation of a stable complex. GrpE releases ADP from DnaK; ATP binding to DnaK triggers the release of the substrate protein, thus completing the reaction cycle. Several rounds of ATP-dependent interactions between DnaJ, DnaK and GrpE are required for fully efficient folding. This chain is Protein GrpE, found in Bacillus cereus (strain AH187).